Here is a 181-residue protein sequence, read N- to C-terminus: Biofilm-surface layer protein A (181 aa).

The N-terminal stretch at 1–28 (MKRKLLSSLAISALSLGLLVSAPTASFA) is a signal peptide.

Belongs to the BslA/BslB family. Forms polymers.

The protein resides in the secreted. It localises to the cell wall. Involved in biofilm formation. Self-polymerizes and forms a layer on the surface of biofilms that confers hydrophobicity to the biofilm. The layer is stable and capable of resistance to high mechanical force compression. Required for complex colony architecture. May function synergistically with exopolysaccharides and TasA amyloid fibers to facilitate the assembly of the biofilm matrix. The protein is Biofilm-surface layer protein A of Bacillus subtilis (strain 168).